Here is a 144-residue protein sequence, read N- to C-terminus: Translation initiation factor 5A (144 aa).

At Lys-38 the chain carries Hypusine.

Belongs to the eIF-5A family.

It localises to the cytoplasm. In terms of biological role, functions by promoting the formation of the first peptide bond. The sequence is that of Translation initiation factor 5A from Nanoarchaeum equitans (strain Kin4-M).